A 472-amino-acid polypeptide reads, in one-letter code: Zinc finger imprinted 3 (472 aa).

A KRAB domain is found at 8 to 80 (VTFEDVTVNF…EEEVLGSGRA (73 aa)). 11 C2H2-type zinc fingers span residues 167–189 (LKCNACRKLFSSKSRLQSHLRRH), 195–217 (FECHSCGRAFGEKWKLDKHQKTH), 223–245 (YKCENCGNAYKQKSNLFQHQKMH), 251–273 (YQCKTCGKAFSWKSSCINHEKIH), 279–301 (YQCNECEKSFRQNSTLIQHKKVH), 307–329 (FQCTDCGKAFIYKSDLVKHQRIH), 335–357 (YKCSICEKAFSQKSNVIDHEKIH), 363–385 (YECDLCGNTFIQKKNLIQHKKIH), 391–413 (YECNRCGKAFFQKSNLHSHQKTH), 419–441 (YRCSECGKTFIRKLNLSLHKKTH), and 447–470 (YGCSECGKAFADRSYLVRHQKRIH).

This sequence belongs to the krueppel C2H2-type zinc-finger protein family.

The protein resides in the nucleus. Its function is as follows. May be involved in transcriptional regulation. In Homo sapiens (Human), this protein is Zinc finger imprinted 3 (ZIM3).